A 218-amino-acid polypeptide reads, in one-letter code: uncharacterized protein (218 aa).

This is an uncharacterized protein from Orgyia pseudotsugata multicapsid polyhedrosis virus (OpMNPV).